We begin with the raw amino-acid sequence, 110 residues long: UPF0122 protein SH1678 (110 aa).

Belongs to the UPF0122 family.

In terms of biological role, might take part in the signal recognition particle (SRP) pathway. This is inferred from the conservation of its genetic proximity to ftsY/ffh. May be a regulatory protein. In Staphylococcus haemolyticus (strain JCSC1435), this protein is UPF0122 protein SH1678.